We begin with the raw amino-acid sequence, 259 residues long: Thiazole synthase (259 aa).

The Schiff-base intermediate with DXP role is filled by lysine 95. 1-deoxy-D-xylulose 5-phosphate contacts are provided by residues glycine 156, 182-183 (AG), and 204-205 (NT).

This sequence belongs to the ThiG family. Homotetramer. Forms heterodimers with either ThiH or ThiS.

The protein localises to the cytoplasm. The catalysed reaction is [ThiS sulfur-carrier protein]-C-terminal-Gly-aminoethanethioate + 2-iminoacetate + 1-deoxy-D-xylulose 5-phosphate = [ThiS sulfur-carrier protein]-C-terminal Gly-Gly + 2-[(2R,5Z)-2-carboxy-4-methylthiazol-5(2H)-ylidene]ethyl phosphate + 2 H2O + H(+). Its pathway is cofactor biosynthesis; thiamine diphosphate biosynthesis. In terms of biological role, catalyzes the rearrangement of 1-deoxy-D-xylulose 5-phosphate (DXP) to produce the thiazole phosphate moiety of thiamine. Sulfur is provided by the thiocarboxylate moiety of the carrier protein ThiS. In vitro, sulfur can be provided by H(2)S. The chain is Thiazole synthase from Proteus mirabilis (strain HI4320).